The following is a 129-amino-acid chain: Histone H2A type 2-C (129 aa).

Residues 1 to 22 (MSGRGKQGGKARAKAKSRSSRA) form a disordered region. Serine 2 is modified (N-acetylserine). At serine 2 the chain carries Phosphoserine; by RPS6KA5. Arginine 4 carries the citrulline; alternate modification. Position 4 is a symmetric dimethylarginine; by PRMT5; alternate (arginine 4). 2 positions are modified to N6-(2-hydroxyisobutyryl)lysine; alternate: lysine 6 and lysine 10. Lysine 6 carries the post-translational modification N6-acetyllysine; alternate. Over residues 7 to 19 (QGGKARAKAKSRS) the composition is skewed to basic residues. Lysine 10 bears the N6-lactoyllysine; alternate mark. Residue lysine 10 is modified to N6-succinyllysine; alternate. Glycyl lysine isopeptide (Lys-Gly) (interchain with G-Cter in ubiquitin) cross-links involve residues lysine 14 and lysine 16. An N6-(2-hydroxyisobutyryl)lysine; alternate modification is found at lysine 37. Lysine 37 carries the post-translational modification N6-(beta-hydroxybutyryl)lysine; alternate. Lysine 37 bears the N6-crotonyllysine; alternate mark. N6-(2-hydroxyisobutyryl)lysine is present on residues lysine 75 and lysine 76. Lysine 96 bears the N6-(2-hydroxyisobutyryl)lysine; alternate mark. At lysine 96 the chain carries N6-succinyllysine; alternate. The residue at position 96 (lysine 96) is an N6-glutaryllysine; alternate. Lysine 100 bears the N6-glutaryllysine mark. Residue glutamine 105 is modified to N5-methylglutamine. The residue at position 119 (lysine 119) is an N6-(2-hydroxyisobutyryl)lysine; alternate. N6-crotonyllysine; alternate is present on residues lysine 119 and lysine 120. Lysine 119 and lysine 120 each carry N6-glutaryllysine; alternate. Lysine 120 participates in a covalent cross-link: Glycyl lysine isopeptide (Lys-Gly) (interchain with G-Cter in ubiquitin); alternate. Phosphothreonine; by DCAF1 is present on threonine 121. Serine 123 is subject to Phosphoserine. At lysine 125 the chain carries N6-crotonyllysine.

The protein belongs to the histone H2A family. The nucleosome is a histone octamer containing two molecules each of H2A, H2B, H3 and H4 assembled in one H3-H4 heterotetramer and two H2A-H2B heterodimers. The octamer wraps approximately 147 bp of DNA. In terms of processing, deiminated on Arg-4 in granulocytes upon calcium entry. Post-translationally, monoubiquitination of Lys-120 (H2AK119Ub) by RING1, TRIM37 and RNF2/RING2 complex gives a specific tag for epigenetic transcriptional repression and participates in X chromosome inactivation of female mammals. It is involved in the initiation of both imprinted and random X inactivation. Ubiquitinated H2A is enriched in inactive X chromosome chromatin. Ubiquitination of H2A functions downstream of methylation of 'Lys-27' of histone H3 (H3K27me). H2AK119Ub by RNF2/RING2 can also be induced by ultraviolet and may be involved in DNA repair. Following DNA double-strand breaks (DSBs), it is ubiquitinated through 'Lys-63' linkage of ubiquitin moieties by the E2 ligase UBE2N and the E3 ligases RNF8 and RNF168, leading to the recruitment of repair proteins to sites of DNA damage. Ubiquitination at Lys-14 and Lys-16 (H2AK13Ub and H2AK15Ub, respectively) in response to DNA damage is initiated by RNF168 that mediates monoubiquitination at these 2 sites, and 'Lys-63'-linked ubiquitin are then conjugated to monoubiquitin; RNF8 is able to extend 'Lys-63'-linked ubiquitin chains in vitro. H2AK119Ub and ionizing radiation-induced 'Lys-63'-linked ubiquitination (H2AK13Ub and H2AK15Ub) are distinct events. Phosphorylation on Ser-2 (H2AS1ph) is enhanced during mitosis. Phosphorylation on Ser-2 by RPS6KA5/MSK1 directly represses transcription. Acetylation of H3 inhibits Ser-2 phosphorylation by RPS6KA5/MSK1. Phosphorylation at Thr-121 (H2AT120ph) by DCAF1 is present in the regulatory region of many tumor suppresor genes and down-regulates their transcription. In terms of processing, symmetric dimethylation on Arg-4 by the PRDM1/PRMT5 complex may play a crucial role in the germ-cell lineage. Post-translationally, glutamine methylation at Gln-105 (H2AQ104me) by FBL is specifically dedicated to polymerase I. It is present at 35S ribosomal DNA locus and impairs binding of the FACT complex. Crotonylation (Kcr) is specifically present in male germ cells and marks testis-specific genes in post-meiotic cells, including X-linked genes that escape sex chromosome inactivation in haploid cells. Crotonylation marks active promoters and enhancers and confers resistance to transcriptional repressors. It is also associated with post-meiotically activated genes on autosomes. In terms of processing, lactylated in macrophages by EP300/P300 by using lactoyl-CoA directly derived from endogenous or exogenous lactate, leading to stimulates gene transcription.

The protein resides in the nucleus. The protein localises to the chromosome. In terms of biological role, core component of nucleosome. Nucleosomes wrap and compact DNA into chromatin, limiting DNA accessibility to the cellular machineries which require DNA as a template. Histones thereby play a central role in transcription regulation, DNA repair, DNA replication and chromosomal stability. DNA accessibility is regulated via a complex set of post-translational modifications of histones, also called histone code, and nucleosome remodeling. This chain is Histone H2A type 2-C, found in Bos taurus (Bovine).